The sequence spans 527 residues: Serine/threonine-protein kinase NLK (527 aa).

2 sufficient for interaction with DAPK3 regions span residues methionine 1–histidine 125 and histidine 124–isoleucine 416. Required for interaction with TAB2 regions lie at residues methionine 1–glutamine 304 and tyrosine 434–glutamate 527. Disordered regions lie at residues alanine 22 to alanine 72 and glutamine 90 to glutamate 139. Positions glycine 26–histidine 54 are enriched in basic residues. A compositionally biased stretch (low complexity) spans proline 103–alanine 119. A compositionally biased stretch (basic residues) spans lysine 122–histidine 131. A Protein kinase domain is found at isoleucine 138–leucine 427. ATP contacts are provided by residues isoleucine 144–valine 152 and lysine 167. The active-site Proton acceptor is the aspartate 264. Threonine 298 carries the phosphothreonine; by autocatalysis modification. The short motif at threonine 298 to glutamate 300 is the TQE element. The required for homodimerization and kinase activation and localization to the nucleus stretch occupies residues aspartate 428 to glutamate 527. Position 522 is a phosphoserine (serine 522).

This sequence belongs to the protein kinase superfamily. CMGC Ser/Thr protein kinase family. MAP kinase subfamily. In terms of assembly, homodimer. Homodimerization is required for intermolecular autophosphorylation, kinase activation and nuclear localization. Interacts with RNF138/NARF. Interacts with FOXO1 and FOXO3. Interacts with the upstream activating kinases HIPK2 and MAP3K7/TAK1. Interaction with MAP3K7/TAK1 seems to be indirect, and may be mediated by other proteins such as STAT3, TAB1 and TAB2. Interacts with and phosphorylates a number of transcription factors including FOXO4, LEF1, MYB, MYBL1, MYBL2, NOTCH1 and TCF7L2/TCF4. May interact with components of cullin-RING-based SCF (SKP1-CUL1-F-box protein) E3 ubiquitin-protein ligase complexes. Interacts with MEF2A. Interacts with ATF5; the interaction stabilizes ATF5 at the protein level in a kinase-independent manner. Mg(2+) serves as cofactor. In terms of processing, phosphorylated on Thr-298. Intermolecular autophosphorylation on Thr-298 activates the enzyme. As to expression, expressed at high levels in the brain, and at lower levels in heart, kidney, lung and liver.

The protein localises to the nucleus. The protein resides in the cytoplasm. It catalyses the reaction L-seryl-[protein] + ATP = O-phospho-L-seryl-[protein] + ADP + H(+). It carries out the reaction L-threonyl-[protein] + ATP = O-phospho-L-threonyl-[protein] + ADP + H(+). Activated by the non-canonical Wnt signaling pathway, in which WNT5A leads to activation of MAP3K7/TAK1 and HIPK2, which subsequently phosphorylates and activates this protein. Activated by dimerization and subsequent intermolecular autophosphorylation on Thr-298. Other cytokines such as IL6 may also activate this regulatory circuit. In terms of biological role, serine/threonine-protein kinase that regulates a number of transcription factors with key roles in cell fate determination. Positive effector of the non-canonical Wnt signaling pathway, acting downstream of WNT5A, MAP3K7/TAK1 and HIPK2. Negative regulator of the canonical Wnt/beta-catenin signaling pathway. Binds to and phosphorylates TCF7L2/TCF4 and LEF1, promoting the dissociation of the TCF7L2/LEF1/beta-catenin complex from DNA, as well as the ubiquitination and subsequent proteolysis of LEF1. Together these effects inhibit the transcriptional activation of canonical Wnt/beta-catenin target genes. Negative regulator of the Notch signaling pathway. Binds to and phosphorylates NOTCH1, thereby preventing the formation of a transcriptionally active ternary complex of NOTCH1, RBPJ/RBPSUH and MAML1. Negative regulator of the MYB family of transcription factors. Phosphorylation of MYB leads to its subsequent proteolysis while phosphorylation of MYBL1 and MYBL2 inhibits their interaction with the coactivator CREBBP. Other transcription factors may also be inhibited by direct phosphorylation of CREBBP itself. Acts downstream of IL6 and MAP3K7/TAK1 to phosphorylate STAT3, which is in turn required for activation of NLK by MAP3K7/TAK1. Upon IL1B stimulus, cooperates with ATF5 to activate the transactivation activity of C/EBP subfamily members. Phosphorylates ATF5 but also stabilizes ATF5 protein levels in a kinase-independent manner. Acts as an inhibitor of the mTORC1 complex in response to osmotic stress by mediating phosphorylation of RPTOR, thereby preventing recruitment of the mTORC1 complex to lysosomes. This is Serine/threonine-protein kinase NLK from Mus musculus (Mouse).